A 295-amino-acid chain; its full sequence is Cuticle collagen 3A3 (295 aa).

Residues 81 to 278 form a disordered region; that stretch reads AITSSEENGG…GRPGEPGICP (198 aa). Composition is skewed to pro residues over residues 97 to 109 and 146 to 160; these read PGPP…PGRP and AGPP…PPGD. 3 triple-helical region regions span residues 98–127, 147–203, and 212–277; these read GPPG…PGLP, GPPG…VGED, and GDQG…PGIC. The span at 172-182 shows a compositional bias: low complexity; it reads QDGIPGQQGTK. The segment covering 217 to 228 has biased composition (pro residues); sequence PGEPGPEGPPGE. Positions 229–244 are enriched in low complexity; sequence PGLQGPVGMPGQVGQK. The span at 261 to 271 shows a compositional bias: pro residues; it reads RPGPPGPPGRP.

It belongs to the cuticular collagen family.

Its function is as follows. Nematode cuticles are composed largely of collagen-like proteins. The cuticle functions both as an exoskeleton and as a barrier to protect the worm from its environment. The protein is Cuticle collagen 3A3 (3A3) of Haemonchus contortus (Barber pole worm).